The primary structure comprises 209 residues: uncharacterized protein (209 aa).

The N-terminal stretch at 1 to 17 is a signal peptide; sequence MKRLVTGLLALSLFLAA. Positions 17–105 are disordered; that stretch reads ACGQDSDQQK…SNNQANNNQK (89 aa). Cys18 is lipidated: N-palmitoyl cysteine. Residue Cys18 is the site of S-diacylglycerol cysteine attachment. The span at 23-70 shows a compositional bias: basic and acidic residues; it reads DQQKDGNKEKDDKAKTEQQDKKTNDSSKDKKDNKDDSKDVNKDNKDNS. Residues 71-105 show a composition bias toward low complexity; that stretch reads ANDNQQQSNSNATNNDQNQTNNNQSSNNQANNNQK.

It localises to the cell membrane. This is an uncharacterized protein from Staphylococcus aureus (strain COL).